A 170-amino-acid chain; its full sequence is Urease accessory protein UreE (170 aa).

The tract at residues 134-170 is disordered; the sequence is ESGAYGGGHHHHGDDGHHPLAPIPLRQKIHRPSDKAE.

The protein belongs to the UreE family.

The protein localises to the cytoplasm. Involved in urease metallocenter assembly. Binds nickel. Probably functions as a nickel donor during metallocenter assembly. The sequence is that of Urease accessory protein UreE from Janthinobacterium sp. (strain Marseille) (Minibacterium massiliensis).